The sequence spans 380 residues: Queuine tRNA-ribosyltransferase (380 aa).

Aspartate 96 (proton acceptor) is an active-site residue. Substrate contacts are provided by residues 96–100, aspartate 150, glutamine 193, and glycine 220; that span reads DSGGF. Positions 251–257 are RNA binding; it reads GVGAPDS. Catalysis depends on aspartate 270, which acts as the Nucleophile. Residues 275-279 are RNA binding; important for wobble base 34 recognition; sequence TRIAR. 4 residues coordinate Zn(2+): cysteine 308, cysteine 310, cysteine 313, and histidine 339.

The protein belongs to the queuine tRNA-ribosyltransferase family. Homodimer. Within each dimer, one monomer is responsible for RNA recognition and catalysis, while the other monomer binds to the replacement base PreQ1. Zn(2+) is required as a cofactor.

The enzyme catalyses 7-aminomethyl-7-carbaguanine + guanosine(34) in tRNA = 7-aminomethyl-7-carbaguanosine(34) in tRNA + guanine. Its pathway is tRNA modification; tRNA-queuosine biosynthesis. Functionally, catalyzes the base-exchange of a guanine (G) residue with the queuine precursor 7-aminomethyl-7-deazaguanine (PreQ1) at position 34 (anticodon wobble position) in tRNAs with GU(N) anticodons (tRNA-Asp, -Asn, -His and -Tyr). Catalysis occurs through a double-displacement mechanism. The nucleophile active site attacks the C1' of nucleotide 34 to detach the guanine base from the RNA, forming a covalent enzyme-RNA intermediate. The proton acceptor active site deprotonates the incoming PreQ1, allowing a nucleophilic attack on the C1' of the ribose to form the product. After dissociation, two additional enzymatic reactions on the tRNA convert PreQ1 to queuine (Q), resulting in the hypermodified nucleoside queuosine (7-(((4,5-cis-dihydroxy-2-cyclopenten-1-yl)amino)methyl)-7-deazaguanosine). The sequence is that of Queuine tRNA-ribosyltransferase from Streptococcus pyogenes serotype M6 (strain ATCC BAA-946 / MGAS10394).